Here is a 152-residue protein sequence, read N- to C-terminus: Zinc finger SWIM domain-containing protein 7 (152 aa).

The SWIM-type zinc-finger motif lies at 76–114 (YTCLASCHYCSCPAFSFSVLRKSDSLLCKHLLAIYLSQL).

This sequence belongs to the SWS1 family. As to quaternary structure, interacts with RAD51D and XRCC3; involved in homologous recombination repair. Interacts with SWSAP1; they form a functional complex involved in homologous recombination repair and stabilize each other.

The protein localises to the nucleus. Its function is as follows. Involved in early stages of the homologous recombination repair (HRR) pathway of double-stranded DNA breaks arising during DNA replication or induced by DNA-damaging agents. Required for meiotic progression, hence for fertility. The protein is Zinc finger SWIM domain-containing protein 7 (Zswim7) of Mus musculus (Mouse).